We begin with the raw amino-acid sequence, 335 residues long: Methyltransferase pgmE (335 aa).

It belongs to the methyltransferase superfamily.

The protein operates within pigment biosynthesis. It functions in the pathway secondary metabolite biosynthesis. In terms of biological role, methyltransferase; part of the gene cluster that mediates the biosynthesis of pleosporalin A, ascomycone A, as well as a third cryptic naphthoquinone derived pigment, all responsible for the coloration of conidia. Essential for the production of pleosporalin A, but not the 2 other final products. The pathway begins with the biosynthesis of the cyclized heptaketide 3-acetonyl-1,6,8-trihydroxy-2-naphthaldehyde by the NR-PKS pgmA. The C-6 hydroxyl group is further methylated by the O-methyltransferase pgmB to yield fusarubinaldehyde which is in turn oxidized by the cytochrome P450 monooxygenase pgmC at C-9. The C-1 hydroxyl group is then methylated spontaneously. Although pgmE, pgmD and pgmH are essential for the production of pleosporalin A, it is not the case for the 2 other final products and it remains difficult to assign a specific function to each enzyme. PgmF and pgmG seem not to be involved in pigment biosynthesis although they were regulated by the cluster-specific transcription factor pgmR. This Aspergillus terreus protein is Methyltransferase pgmE.